A 247-amino-acid polypeptide reads, in one-letter code: Cobalt transport protein CbiM (247 aa).

Residues 1–21 (MVGWGVLILLMVLWLPRQAYA) form the signal peptide. A run of 7 helical transmembrane segments spans residues 27–47 (GYLP…ALIL), 64–84 (LVLA…LPSV), 96–116 (LGAV…ILLF), 119–139 (LLLA…MAVV), 159–179 (GVAV…TTSL), 181–201 (LALA…KFAS), and 202–222 (IFAV…VIMV).

It belongs to the CbiM family. As to quaternary structure, forms an energy-coupling factor (ECF) transporter complex composed of an ATP-binding protein (A component, CbiO), a transmembrane protein (T component, CbiQ) and 2 possible substrate-capture proteins (S components, CbiM and CbiN) of unknown stoichimetry.

The protein resides in the cell membrane. It functions in the pathway cofactor biosynthesis; adenosylcobalamin biosynthesis. Its function is as follows. Part of the energy-coupling factor (ECF) transporter complex CbiMNOQ involved in cobalt import. The sequence is that of Cobalt transport protein CbiM from Kyrpidia tusciae (strain DSM 2912 / NBRC 15312 / T2) (Bacillus tusciae).